The primary structure comprises 2211 residues: MAMALAVGAPSEQRGNLPYNTLKDGPTVDSMKATTDGKNGQGESAFWDTCVHTVFREHCQRAPNSPAVNAWDGSFTYAELDSLSDAIASVLILSGVGPESIIPIYMQKSRWTTVAILGVLKSGGAFTLLDPSHPRSRVEEISKEIQARFILTSEKLSKQCLEMFSVLVVEHLSRACLPSPGQAGHTRSRPENAAYIAFTSGSTGKPKGIVIEHRSYCSGARSHLKVFGIDSTSRVLQFASYAFDVSIMETLSTLMAGGCLCVMSESERSDPNLFVVSYKNLRISHCFMTPSFARTVPWTECCNPPPTLIVGGELMRPSDARAYKEMGIRCMNAYGPAECSVNVSVQSRVEAAVDPRNIGYTTGATAWIISPENPEELMPTGTVGELLVEGPIVGRGYLNDPKATRQAFIDTPAWLRRHRKGTSYQHRVYRTGDLASLDSITGALLLHGRKDAQVKIRGQRVELPDIEHHLQLTLPNDNAEVIVEKVTFSDDGSEKLIAFVLVRPSNTDSVIGNTGDRLFLAPQSQIMEQFAISKKHLQTHLPSYMVPDIFIPISTLPQTASGKTDRKALRTRAAALSRRDVQCFLLSPAGGKRPPSTPKEATIRSLYSNVLNLPIDLIGMDDTFLRLGGDSLQAIRLVAAARAAGLILQAKDILSSQSTLAEQSKRAGLIQTIDRTWESSPPFALLHGPTRHAIVDLAQKQCRVPSNLIEDIYPCTALQEGMFITSLKHPGMYTGQIIFDIPDRMELPRLRAAWLSVVSENAALRTRIIETHEGLMQAVIVDDFVWEEETDEMLLSSDGEALEITKIGVPLVRFRYRPRHRQLMMTIHHSIWDGWSLRLVHEQLHRAYIGRDLLPSTSYRSFIQYTQELQGADEFWASELAGVNAPIFPTLPSGNYRPRVNASHRHVVRNLASTGKEEHTAATYIHLAWSLLVAHYTDADETVYGVTVNGRSADVPGVENIVGPTIATVPTRIRVNEEDTVEMALDHVQDALARMIPYEQAGLQRISRCSRDASEACRFQTLLIIEAPTDSDVDCEKNEAGNFSIIGGTTQTGMDYTAFSSYAMMLVFRTSANKSAISFDITYDAQVIGHDEVERMAHQFEHVLRHIYTLATGRIGDISFIGPRDIEQVQQWNSSMPPADNRFLQELIFAQCSRRPQASAIISWDGSWTYRELWAHSSFFARQLQRYGVTRGTPVAVCLDRSRWSIAVILGVLLARGTCVLIDLLAPRQRVRDILQIAGTGILVHSHATATLTSGLCPTVVNVSFLAAQSDSSQPEFPFTLETWGGTPEDLAFIIFTSGSTGHPKGIEMPHRTLSTSISHHSAGMRVTSSSRVLHFSSYAFDVSIYEIFTTLAAGGTICVPSEFDRMNNLAGFIQDTQVNWAFLTPSTARSLNPADVPLLTTLVLGGEAVTHESVEVWAKGRSLINGYGPAEATICGVGNIPEAGWKSGVVGRIIGGLGWVTVPSDPNRLAAVGAVGELLLEGPFLARGYLNLPEVTKAAFIDPPSWRTRIPAPSPYSFLYRTGDLVRYQPDGSIQYVGRKDSRVKLRGQLVDLGAVEASVMRVYPAAGQVVADVLVSENTARLIAMVKLGPSVTENHDGPMFAAPDLVFNEAAASIQARLRAIVPAYMVPSMFIPLRHIPRTLTGKTDRRRLRDKILSLSHSDLQRYMMSSSTKTPMSDDNERRLQEIWAEVLQLPCEAIGREDSFLSLGGESLATMKMVALARRVGFMFAVTDVMNNTSLSTLARSRHLITEQAILTSSPSLSLPTIEGESLQEILRPLLNAGHIQGGNDIAAIHPVTAAQAFLVQRYPWSHFQFDLSGAVSPSKLQTACTALMARFTILRTVFVEHAGCLLQLVLREVPNRVHEITTNEPLDDFCNSVCQQQQDVCVVNSTTLPTLFTLVSNRQLNRHRLLLRLAHAQYDLTTIPLIVQSLADEYNRTLRSGFSADFGYYLSHHKRQNNDDRSHNFWKRYLSGSSMMSTNQTADPTTVQERVFHVTGSCIIIPTSHPPDITIATAVKAAVCLVLAARTGCTDIVIGQTVDARCSSADSTLDQIVGPCTNYIPYRLSVCCSKTALEYLRSAQAQHTTCLRYSSLDFDQIVAKCTSWPSSTQFGYIVQHQDTGAELALTLGGDTTSLPMTSYGRVFPQGEVWIGSTPCSTGLRIDVIALSAVLSQKDAQTMAEEVGAALEKLLGCGYRRLSHLIGNTFAT.

The adenylation 1 stretch occupies residues 76–475 (TYAELDSLSD…IEHHLQLTLP (400 aa)). One can recognise a Carrier 1 domain in the interval 594–671 (PPSTPKEATI…EQSKRAGLIQ (78 aa)). Position 631 is an O-(pantetheine 4'-phosphoryl)serine (Ser-631). Positions 710-975 (EDIYPCTALQ…IATVPTRIRV (266 aa)) are condensation 1. Residues 1169–1563 (TYRELWAHSS…LGAVEASVMR (395 aa)) form an adenylation 2 region. In terms of domain architecture, Carrier 2 spans 1677 to 1756 (PMSDDNERRL…RSRHLITEQA (80 aa)). Residue Ser-1714 is modified to O-(pantetheine 4'-phosphoryl)serine. The segment at 1814-2069 (HFQFDLSGAV…CTNYIPYRLS (256 aa)) is condensation 2.

This sequence belongs to the NRP synthetase family.

It catalyses the reaction L-proline + L-tryptophan + 2 ATP = brevianamide F + 2 AMP + 2 diphosphate + 2 H(+). It participates in mycotoxin biosynthesis. Functionally, nonribosomal peptide synthetase; part of the gene cluster that mediates the biosynthesis of fumitremorgins, indole alkaloids that carry not only intriguing chemical structures, but also interesting biological and pharmacological activities. The biosynthesis of fumitremorgin-type alkaloids begins by condensation of the two amino acids L-tryptophan and L-proline to brevianamide F, catalyzed by the non-ribosomal peptide synthetase ftmA. Brevianamide F is then prenylated by the prenyltransferase ftmPT1/ftmB in the presence of dimethylallyl diphosphate, resulting in the formation of tryprostatin B. The three cytochrome P450 monooxygenases, ftmP450-1/ftmC, ftmP450-2/ftmE and ftmP450-3/FtmG, are responsible for the conversion of tryprostatin B to 6-hydroxytryprostatin B, tryprostatin A to fumitremorgin C and fumitremorgin C to 12,13-dihydroxyfumitremorgin C, respectively. The putative methyltransferase ftmMT/ftmD is expected for the conversion of 6-hydroxytryprostatin B to tryprostatin A. FtmPT2/FtmH catalyzes the prenylation of 12,13-dihydroxyfumitre-morgin C in the presence of dimethylallyl diphosphate, resulting in the formation of fumitremorgin B. Fumitremorgin B is further converted to verruculogen by ftmOx1/ftmF via the insertion of an endoperoxide bond between the two prenyl moieties. In some fungal species, verruculogen is further converted to fumitremorgin A, but the enzymes involved in this step have not been identified yet. This Aspergillus fumigatus (strain ATCC MYA-4609 / CBS 101355 / FGSC A1100 / Af293) (Neosartorya fumigata) protein is Nonribosomal peptide synthetase 13.